We begin with the raw amino-acid sequence, 421 residues long: Testin (421 aa).

The PET domain occupies 92–199 (MILTNPVAAK…GDVKLPREMD (108 aa)). Residues 133–164 (EKQPVAGSEGAQYRKKQLAKQLPAHDQDPSKC) form a disordered region. Positions 155-164 (PAHDQDPSKC) are enriched in basic and acidic residues. 3 LIM zinc-binding domains span residues 234-297 (YSCY…CDSE), 299-359 (PRCA…NHAV), and 362-421 (QGCH…KMMS).

It belongs to the prickle / espinas / testin family. As to quaternary structure, interacts via LIM domain 1 with ZYX. Interacts (via LIM domain 3) with ENAH and VASP. Interacts with ALKBH4, talin, actin, alpha-actinin, GRIP1 and PXN. Interacts (via LIM domain 2) with ACTL7A (via N-terminus). Heterodimer with ACTL7A; the heterodimer interacts with ENAH to form a heterotrimer.

It localises to the cytoplasm. It is found in the cell junction. The protein resides in the focal adhesion. Its function is as follows. Scaffold protein that may play a role in cell adhesion, cell spreading and in the reorganization of the actin cytoskeleton. Plays a role in the regulation of cell proliferation. May act as a tumor suppressor. This is Testin (TES) from Equus caballus (Horse).